The chain runs to 272 residues: GPN-loop GTPase 3 (272 aa).

13–18 (GAGKST) contributes to the GTP binding site. The Gly-Pro-Asn (GPN)-loop; involved in dimer interface motif lies at 70–72 (GPN). 173-176 (SKLD) contributes to the GTP binding site.

It belongs to the GPN-loop GTPase family. In terms of assembly, heterodimers with NPA3/GPN1 or GPN2. Binds to RNA polymerase II (RNAPII).

Functionally, small GTPase required for proper nuclear localization of RNA polymerase II and III (RNAPII and RNAPIII). May act at an RNAP assembly step prior to nuclear import. Promotes sister chromatid separation during anaphase. This is GPN-loop GTPase 3 from Saccharomyces cerevisiae (strain ATCC 204508 / S288c) (Baker's yeast).